A 213-amino-acid polypeptide reads, in one-letter code: Large ribosomal subunit protein mL67 (213 aa).

This sequence belongs to the mitochondrion-specific ribosomal protein mL67 family.

The protein resides in the nucleus. The protein localises to the mitochondrion. Functionally, transcription factor involved in regulation of RNA polymerase II-dependent transcription. Also involved in regulation of mitochondrial DNA recombination, maintenance and repair, and generation of homoplasmic cells. The chain is Large ribosomal subunit protein mL67 (MHR1) from Eremothecium gossypii (strain ATCC 10895 / CBS 109.51 / FGSC 9923 / NRRL Y-1056) (Yeast).